A 202-amino-acid polypeptide reads, in one-letter code: FMN-dependent NADH:quinone oxidoreductase (202 aa).

FMN contacts are provided by residues Ser10, 16–18 (SHS), and 96–99 (MYNF).

It belongs to the azoreductase type 1 family. Homodimer. FMN is required as a cofactor.

The enzyme catalyses 2 a quinone + NADH + H(+) = 2 a 1,4-benzosemiquinone + NAD(+). The catalysed reaction is N,N-dimethyl-1,4-phenylenediamine + anthranilate + 2 NAD(+) = 2-(4-dimethylaminophenyl)diazenylbenzoate + 2 NADH + 2 H(+). Its function is as follows. Quinone reductase that provides resistance to thiol-specific stress caused by electrophilic quinones. In terms of biological role, also exhibits azoreductase activity. Catalyzes the reductive cleavage of the azo bond in aromatic azo compounds to the corresponding amines. The chain is FMN-dependent NADH:quinone oxidoreductase from Hydrogenovibrio crunogenus (strain DSM 25203 / XCL-2) (Thiomicrospira crunogena).